A 114-amino-acid polypeptide reads, in one-letter code: Ig kappa chain V-I region S107A (114 aa).

The segment at 1–23 is framework-1; the sequence is DIVMTQSPTFLAVTASKKVTISC. Residues C23 and C94 are joined by a disulfide bond. A complementarity-determining-1 region spans residues 24 to 40; that stretch reads TASESLYSSKHKVHYLA. The segment at 41-55 is framework-2; it reads WYQKKPEQSPKLLIY. The tract at residues 56 to 62 is complementarity-determining-2; sequence GASNRYI. The framework-3 stretch occupies residues 63 to 94; sequence GVPDRFTGSGSGTDFTLTISSVQVEDLTHYYC. A complementarity-determining-3 region spans residues 95 to 103; that stretch reads AQFYSYPLT. Residues 104-113 form a framework-4 region; the sequence is FGAGTKLELK.

In terms of biological role, anti-phosphocholine antibody. This is Ig kappa chain V-I region S107A (Igkv7-33) from Mus musculus (Mouse).